A 146-amino-acid chain; its full sequence is Large-conductance mechanosensitive channel (146 aa).

2 helical membrane-spanning segments follow: residues 15-35 and 81-101; these read VSLAIGVVIGGAFSKIVTSLV and GIFINNIIDFLIVAFSIFIII.

This sequence belongs to the MscL family. As to quaternary structure, homopentamer.

It is found in the cell membrane. Its function is as follows. Channel that opens in response to stretch forces in the membrane lipid bilayer. May participate in the regulation of osmotic pressure changes within the cell. This chain is Large-conductance mechanosensitive channel, found in Clostridium beijerinckii (strain ATCC 51743 / NCIMB 8052) (Clostridium acetobutylicum).